Consider the following 118-residue polypeptide: Small ribosomal subunit protein uS19c (118 aa).

A disordered region spans residues 92–118 (KKSSKKVTKNKKSIKKNIKTTSKKFKK).

It belongs to the universal ribosomal protein uS19 family.

It is found in the plastid. Protein S19 forms a complex with S13 that binds strongly to the 16S ribosomal RNA. The chain is Small ribosomal subunit protein uS19c (rps19) from Euglena longa (Euglenophycean alga).